Consider the following 100-residue polypeptide: NADH-quinone oxidoreductase subunit K (100 aa).

Transmembrane regions (helical) follow at residues 3–23, 29–49, and 63–83; these read PTAY…IGVL, IMIF…LVAF, and FIVM…IVAI.

It belongs to the complex I subunit 4L family. NDH-1 is composed of 15 different subunits. Subunits NuoA, H, J, K, L, M, N constitute the membrane sector of the complex.

The protein localises to the cell membrane. The enzyme catalyses a quinone + NADH + 5 H(+)(in) = a quinol + NAD(+) + 4 H(+)(out). Functionally, NDH-1 shuttles electrons from NADH, via FMN and iron-sulfur (Fe-S) centers, to quinones in the respiratory chain. The immediate electron acceptor for the enzyme in this species is believed to be a menaquinone. Couples the redox reaction to proton translocation (for every two electrons transferred, four hydrogen ions are translocated across the cytoplasmic membrane), and thus conserves the redox energy in a proton gradient. The polypeptide is NADH-quinone oxidoreductase subunit K (Deinococcus geothermalis (strain DSM 11300 / CIP 105573 / AG-3a)).